The following is a 444-amino-acid chain: Glutamate--methylamine ligase (444 aa).

The region spanning 14–97 (HHVKYVLAQF…LVCDGHVNGK (84 aa)) is the GS beta-grasp domain. In terms of domain architecture, GS catalytic spans 103–444 (TRVVLKQQIA…WEINRYVQFY (342 aa)).

This sequence belongs to the glutamine synthetase family. Type 3 subfamily. Requires Mg(2+) as cofactor.

It carries out the reaction methylamine + L-glutamate + ATP = N(5)-methyl-L-glutamine + ADP + phosphate + H(+). It catalyses the reaction ethylamine + L-glutamate + ATP = N(5)-ethyl-L-glutamine + ADP + phosphate + H(+). Formation of theanine is repressed by a high concentration of glutamic acid. Functionally, catalyzes the formation of N(5)-methyl-L-glutamine from glutamate and methylamine. In vitro, can also use ethylamine, hydroxylamine and ammonia, with 75%, 40% and 1% activity compared to methylamine, respectively. This chain is Glutamate--methylamine ligase, found in Methylovorus mays.